A 317-amino-acid polypeptide reads, in one-letter code: MSSSSDAIKAALEKGRAAGLSATGGKNADYIPFLASVPSDLFGLAVVTADGQTFKTGDADIAFAIESISKVFTLALVMEEIGPDSVREKVGADPTGLPFNSVIALELHNGKSLSPLVNAGAIATASLVPGDTADARWNNILECQCGFAGRRLKLSNEVNQSEQTTNFHNRAIAWLLYSAGTCYSDPMEAVDIYTRQCSTLVTATDLATMGATLAAGGVNPISGKRMVSAGNVAPILVEMTMEGLYTALGDWAYTVGLPGKSGVGGGIMAVVPGELAIAAFSPPLDPAGNSVKAMAAVAAVADSLGHNLYTTRGKVSS.

Substrate-binding residues include Ser67, Asn118, Glu162, Asn169, Tyr193, Tyr245, and Val263.

It belongs to the glutaminase family. In terms of assembly, homotetramer.

It catalyses the reaction L-glutamine + H2O = L-glutamate + NH4(+). The chain is Glutaminase from Brucella abortus (strain S19).